Reading from the N-terminus, the 355-residue chain is tRNA pseudouridine synthase D (355 aa).

Aspartate 84 acts as the Nucleophile in catalysis. Residues glycine 160–leucine 306 form the TRUD domain.

The protein belongs to the pseudouridine synthase TruD family.

It carries out the reaction uridine(13) in tRNA = pseudouridine(13) in tRNA. Responsible for synthesis of pseudouridine from uracil-13 in transfer RNAs. This is tRNA pseudouridine synthase D from Pseudomonas aeruginosa (strain UCBPP-PA14).